A 429-amino-acid chain; its full sequence is Ribosomal RNA small subunit methyltransferase B (429 aa).

S-adenosyl-L-methionine is bound by residues 254–260 (CAAPGGK), Asp-277, Asp-303, and Asp-322. Cys-375 serves as the catalytic Nucleophile. The tract at residues 397-419 (ALSETGTPDQPGQQNLPGGEEGD) is disordered. Over residues 400-412 (ETGTPDQPGQQNL) the composition is skewed to polar residues.

Belongs to the class I-like SAM-binding methyltransferase superfamily. RsmB/NOP family.

It is found in the cytoplasm. The enzyme catalyses cytidine(967) in 16S rRNA + S-adenosyl-L-methionine = 5-methylcytidine(967) in 16S rRNA + S-adenosyl-L-homocysteine + H(+). Specifically methylates the cytosine at position 967 (m5C967) of 16S rRNA. This Salmonella agona (strain SL483) protein is Ribosomal RNA small subunit methyltransferase B.